The chain runs to 274 residues: 2,3,4,5-tetrahydropyridine-2,6-dicarboxylate N-succinyltransferase (274 aa).

Belongs to the transferase hexapeptide repeat family.

Its subcellular location is the cytoplasm. The enzyme catalyses (S)-2,3,4,5-tetrahydrodipicolinate + succinyl-CoA + H2O = (S)-2-succinylamino-6-oxoheptanedioate + CoA. It functions in the pathway amino-acid biosynthesis; L-lysine biosynthesis via DAP pathway; LL-2,6-diaminopimelate from (S)-tetrahydrodipicolinate (succinylase route): step 1/3. This Klebsiella pneumoniae (strain 342) protein is 2,3,4,5-tetrahydropyridine-2,6-dicarboxylate N-succinyltransferase.